Reading from the N-terminus, the 166-residue chain is Phosphopantetheine adenylyltransferase (166 aa).

S11 contributes to the substrate binding site. Residues 11–12 (SF) and H19 each bind ATP. The substrate site is built by K43, A76, and R90. Residues 91 to 93 (GLR), E101, and 126 to 132 (LQPISSS) each bind ATP.

The protein belongs to the bacterial CoaD family. Homohexamer. It depends on Mg(2+) as a cofactor.

Its subcellular location is the cytoplasm. It carries out the reaction (R)-4'-phosphopantetheine + ATP + H(+) = 3'-dephospho-CoA + diphosphate. It functions in the pathway cofactor biosynthesis; coenzyme A biosynthesis; CoA from (R)-pantothenate: step 4/5. Functionally, reversibly transfers an adenylyl group from ATP to 4'-phosphopantetheine, yielding dephospho-CoA (dPCoA) and pyrophosphate. This chain is Phosphopantetheine adenylyltransferase, found in Streptococcus equi subsp. zooepidemicus (strain MGCS10565).